The following is a 109-amino-acid chain: Putative pterin-4-alpha-carbinolamine dehydratase (109 aa).

Belongs to the pterin-4-alpha-carbinolamine dehydratase family.

It catalyses the reaction (4aS,6R)-4a-hydroxy-L-erythro-5,6,7,8-tetrahydrobiopterin = (6R)-L-erythro-6,7-dihydrobiopterin + H2O. The sequence is that of Putative pterin-4-alpha-carbinolamine dehydratase from Rickettsia canadensis (strain McKiel).